The sequence spans 211 residues: Transcription factor E (211 aa).

The HTH TFE/IIEalpha-type domain maps to 10–130 (GNPAIYQYLL…LWLMRMDHMN (121 aa)).

It belongs to the TFE family. In terms of assembly, monomer. Interaction with RNA polymerase subunits RpoF and RpoE is necessary for Tfe stimulatory transcription activity. Able to interact with Tbp and RNA polymerase in the absence of DNA promoter. Interacts both with the preinitiation and elongation complexes.

Its function is as follows. Transcription factor that plays a role in the activation of archaeal genes transcribed by RNA polymerase. Facilitates transcription initiation by enhancing TATA-box recognition by TATA-box-binding protein (Tbp), and transcription factor B (Tfb) and RNA polymerase recruitment. Not absolutely required for transcription in vitro, but particularly important in cases where Tbp or Tfb function is not optimal. It dynamically alters the nucleic acid-binding properties of RNA polymerases by stabilizing the initiation complex and destabilizing elongation complexes. Seems to translocate with the RNA polymerase following initiation and acts by binding to the non template strand of the transcription bubble in elongation complexes. The chain is Transcription factor E from Methanocorpusculum labreanum (strain ATCC 43576 / DSM 4855 / Z).